The primary structure comprises 106 residues: MAPLIPGELLPEPGELELNAGRPVTTLSVANSGDRPVQVGSHFHFAEANAALQFDRTAARGQRLDIPAGTAIRFEPGDSRDVNLIPFAGNRRVIGFNGQINGPLDA.

This sequence belongs to the urease beta subunit family. As to quaternary structure, heterotrimer of UreA (gamma), UreB (beta) and UreC (alpha) subunits. Three heterotrimers associate to form the active enzyme.

Its subcellular location is the cytoplasm. The catalysed reaction is urea + 2 H2O + H(+) = hydrogencarbonate + 2 NH4(+). The protein operates within nitrogen metabolism; urea degradation; CO(2) and NH(3) from urea (urease route): step 1/1. The protein is Urease subunit beta of Parasynechococcus marenigrum (strain WH8102).